Consider the following 663-residue polypeptide: DNA ligase 1 (663 aa).

NAD(+)-binding positions include 30–34 (DAEYD) and 78–79 (SL). Residue Lys105 is the N6-AMP-lysine intermediate of the active site. Residues Arg126, Glu161, and Lys294 each coordinate NAD(+). Zn(2+) contacts are provided by Cys389, Cys392, Cys407, and Cys412. One can recognise a BRCT domain in the interval 574–663 (AAGAPLAGKT…WAQLIEAKLV (90 aa)).

The protein belongs to the NAD-dependent DNA ligase family. LigA subfamily. The cofactor is Mg(2+). Mn(2+) serves as cofactor.

It catalyses the reaction NAD(+) + (deoxyribonucleotide)n-3'-hydroxyl + 5'-phospho-(deoxyribonucleotide)m = (deoxyribonucleotide)n+m + AMP + beta-nicotinamide D-nucleotide.. In terms of biological role, DNA ligase that catalyzes the formation of phosphodiester linkages between 5'-phosphoryl and 3'-hydroxyl groups in double-stranded DNA using NAD as a coenzyme and as the energy source for the reaction. It is essential for DNA replication and repair of damaged DNA. The sequence is that of DNA ligase 1 from Nocardia farcinica (strain IFM 10152).